The chain runs to 459 residues: GTPase Der (459 aa).

EngA-type G domains are found at residues 3-169 (PLVA…PPKE) and 183-358 (IRLA…DQFR). Residues 9–16 (GRPNVGKS), 56–60 (DTGGF), 119–122 (NKLD), 189–196 (GRPNVGKS), 236–240 (DTAGI), and 301–304 (NKWD) contribute to the GTP site. One can recognise a KH-like domain in the interval 359 to 442 (FRAPTPQLNR…PIRLIFKGRP (84 aa)).

It belongs to the TRAFAC class TrmE-Era-EngA-EngB-Septin-like GTPase superfamily. EngA (Der) GTPase family. As to quaternary structure, associates with the 50S ribosomal subunit.

In terms of biological role, GTPase that plays an essential role in the late steps of ribosome biogenesis. The protein is GTPase Der of Myxococcus xanthus (strain DK1622).